Here is a 175-residue protein sequence, read N- to C-terminus: Crossover junction endodeoxyribonuclease RuvC (175 aa).

Active-site residues include Asp11, Glu71, and His143. Mg(2+)-binding residues include Asp11, Glu71, and His143.

The protein belongs to the RuvC family. As to quaternary structure, homodimer which binds Holliday junction (HJ) DNA. The HJ becomes 2-fold symmetrical on binding to RuvC with unstacked arms; it has a different conformation from HJ DNA in complex with RuvA. In the full resolvosome a probable DNA-RuvA(4)-RuvB(12)-RuvC(2) complex forms which resolves the HJ. Requires Mg(2+) as cofactor.

The protein resides in the cytoplasm. It carries out the reaction Endonucleolytic cleavage at a junction such as a reciprocal single-stranded crossover between two homologous DNA duplexes (Holliday junction).. Functionally, the RuvA-RuvB-RuvC complex processes Holliday junction (HJ) DNA during genetic recombination and DNA repair. Endonuclease that resolves HJ intermediates. Cleaves cruciform DNA by making single-stranded nicks across the HJ at symmetrical positions within the homologous arms, yielding a 5'-phosphate and a 3'-hydroxyl group; requires a central core of homology in the junction. The consensus cleavage sequence is 5'-(A/T)TT(C/G)-3'. Cleavage occurs on the 3'-side of the TT dinucleotide at the point of strand exchange. HJ branch migration catalyzed by RuvA-RuvB allows RuvC to scan DNA until it finds its consensus sequence, where it cleaves and resolves the cruciform DNA. The polypeptide is Crossover junction endodeoxyribonuclease RuvC (Parvibaculum lavamentivorans (strain DS-1 / DSM 13023 / NCIMB 13966)).